The chain runs to 132 residues: Interleukin-13 (132 aa).

The first 18 residues, 1–18 (MALLLTAVIVLICFGGLT), serve as a signal peptide directing secretion. N-linked (GlcNAc...) asparagine glycosylation is found at asparagine 38, asparagine 49, asparagine 57, and asparagine 75. Cystine bridges form between cysteine 48–cysteine 76 and cysteine 64–cysteine 90.

The protein belongs to the IL-4/IL-13 family. In terms of assembly, interacts with IL13RA2.

It localises to the secreted. In terms of biological role, cytokine that plays important roles in allergic inflammation and immune response to parasite infection. Synergizes with IL2 in regulating interferon-gamma synthesis. Stimulates B-cell proliferation, and activation of eosinophils, basophils, and mast cells. Plays an important role in controlling IL33 activity by modulating the production of transmembrane and soluble forms of interleukin-1 receptor-like 1/IL1RL1. Displays the capacity to antagonize Th1-driven proinflammatory immune response and downregulates synthesis of many proinflammatory cytokines including IL1, IL6, IL10, IL12 and TNF-alpha through a mechanism that partially involves suppression of NF-kappa-B. Also functions on nonhematopoietic cells, including endothelial cells where it induces vascular cell adhesion protein 1/VCAM1, which is important in the recruitment of eosinophils. Exerts its biological effects through its receptors which comprises the IL4R chain and the IL13RA1 chain, to activate JAK1 and TYK2, leading to the activation of STAT6. Aside from IL13RA1, another receptor IL13RA2 acts as a high affinity decoy for IL13 and mediates internalization and depletion of extracellular IL13. The chain is Interleukin-13 (IL13) from Bos taurus (Bovine).